A 141-amino-acid polypeptide reads, in one-letter code: Endoribonuclease YbeY (141 aa).

The Zn(2+) site is built by His105, His109, and Asp115.

The protein belongs to the endoribonuclease YbeY family. It depends on Zn(2+) as a cofactor.

It is found in the cytoplasm. In terms of biological role, single strand-specific metallo-endoribonuclease involved in late-stage 70S ribosome quality control and in maturation of the 3' terminus of the 16S rRNA. This Karelsulcia muelleri (strain GWSS) (Sulcia muelleri) protein is Endoribonuclease YbeY.